Consider the following 690-residue polypeptide: Elongation factor G (690 aa).

The tr-type G domain maps to 8-283; sequence SRCRNIGIMA…AVVDFLPSPS (276 aa). GTP is bound by residues 17–24, 81–85, and 135–138; these read AHIDAGKT, DTPGH, and NKMD.

It belongs to the TRAFAC class translation factor GTPase superfamily. Classic translation factor GTPase family. EF-G/EF-2 subfamily.

It is found in the cytoplasm. Its function is as follows. Catalyzes the GTP-dependent ribosomal translocation step during translation elongation. During this step, the ribosome changes from the pre-translocational (PRE) to the post-translocational (POST) state as the newly formed A-site-bound peptidyl-tRNA and P-site-bound deacylated tRNA move to the P and E sites, respectively. Catalyzes the coordinated movement of the two tRNA molecules, the mRNA and conformational changes in the ribosome. The sequence is that of Elongation factor G from Anaplasma marginale (strain Florida).